We begin with the raw amino-acid sequence, 291 residues long: Ribonuclease Z (291 aa).

The Zn(2+) site is built by His-60, His-62, Asp-64, His-65, His-132, Asp-200, and His-256. Asp-64 acts as the Proton acceptor in catalysis.

This sequence belongs to the RNase Z family. In terms of assembly, homodimer. Zn(2+) is required as a cofactor.

It carries out the reaction Endonucleolytic cleavage of RNA, removing extra 3' nucleotides from tRNA precursor, generating 3' termini of tRNAs. A 3'-hydroxy group is left at the tRNA terminus and a 5'-phosphoryl group is left at the trailer molecule.. Its function is as follows. Zinc phosphodiesterase, which displays some tRNA 3'-processing endonuclease activity. Probably involved in tRNA maturation, by removing a 3'-trailer from precursor tRNA. This Metallosphaera sedula (strain ATCC 51363 / DSM 5348 / JCM 9185 / NBRC 15509 / TH2) protein is Ribonuclease Z.